A 551-amino-acid chain; its full sequence is Cation/acetate symporter ActP (551 aa).

A run of 14 helical transmembrane segments spans residues 8–28, 35–55, 78–98, 105–125, 151–171, 185–205, 208–228, 264–284, 305–325, 357–377, 406–426, 430–450, 465–485, and 496–516; these read ALAATLLPLGAHAADAITGAV, WQAIVMFLIFVALTLYITYWA, GLAIAGDFMSAASFLGISALV, GLIYSLGFLVGWPIILFLIAE, LSACGSLVVVALYLIAQMVGA, VAVVLVGVLMVLYVLFGGMLA, WVQIIKAVLLLCGASFMAFMV, ISALSLGLGLMFGTAGLPHIL, GFMGYFYILTFIIGFGAIMLV, LFLGFISAVAFATILAVVAGL, VSKITVLILGVVAILLGILFE, IAFMVGLAFSIAASCNFPIIL, VGGWLGLLTAVILMILGPTIW, and FPYEYPALFSIAIAFIGIWVF.

Belongs to the sodium:solute symporter (SSF) (TC 2.A.21) family.

The protein resides in the cell inner membrane. Transports acetate. This chain is Cation/acetate symporter ActP, found in Klebsiella pneumoniae (strain 342).